We begin with the raw amino-acid sequence, 603 residues long: Bifunctional 3-dehydroquinate dehydratase/shikimate dehydrogenase, chloroplastic (603 aa).

Positions 1–10 (MAASSTNARL) are enriched in polar residues. The segment at 1-22 (MAASSTNARLTNPPRLLSKPRL) is disordered. Residues 1–66 (MAASSTNARL…VVFSDQRRRR (66 aa)) constitute a chloroplast transit peptide. Positions 13–22 (PPRLLSKPRL) are enriched in low complexity. Positions 96–313 (ICAPVMADSI…QPTIKDLLDL (218 aa)) are 3-dehydroquinate dehydratase. 3 residues coordinate 3-dehydroshikimate: Glu124, Arg126, and Arg155. His214 acts as the Proton acceptor; for 3-dehydroquinate dehydratase activity in catalysis. 3-dehydroshikimate is bound by residues Lys241, Arg279, Ser300, and Gln304. The active-site Schiff-base intermediate with substrate; for 3-dehydroquinate dehydratase activity is Lys241. The segment at 328–558 (IIGKPVSHSK…VYTPRITRLL (231 aa)) is shikimate dehydrogenase. Residues Ser336, Ser338, Thr381, Lys385, Asn406, and Asp423 each coordinate shikimate. Lys385 functions as the For shikimate dehydrogenase activity in the catalytic mechanism. Asp423 serves as the catalytic For shikimate dehydrogenase activity. Residues Ala461, Gly463, Ala464, Asn483, Thr485, Arg488, Met525, and Ala548 each coordinate NADP(+). Position 550 (Tyr550) interacts with shikimate. NADP(+) is bound at residue Gly571. Gln578 and Gln582 together coordinate shikimate.

In the N-terminal section; belongs to the type-I 3-dehydroquinase family. This sequence in the C-terminal section; belongs to the shikimate dehydrogenase family. Monomer.

Its subcellular location is the plastid. The protein resides in the chloroplast. It catalyses the reaction 3-dehydroquinate = 3-dehydroshikimate + H2O. The enzyme catalyses shikimate + NADP(+) = 3-dehydroshikimate + NADPH + H(+). It participates in metabolic intermediate biosynthesis; chorismate biosynthesis; chorismate from D-erythrose 4-phosphate and phosphoenolpyruvate: step 3/7. It functions in the pathway metabolic intermediate biosynthesis; chorismate biosynthesis; chorismate from D-erythrose 4-phosphate and phosphoenolpyruvate: step 4/7. Functionally, bifunctional dehydroquinate dehydratase-shikimate dehydrogenase enzyme that catalyzes two steps in the chorismate biosynthesis pathway. This Arabidopsis thaliana (Mouse-ear cress) protein is Bifunctional 3-dehydroquinate dehydratase/shikimate dehydrogenase, chloroplastic.